Consider the following 194-residue polypeptide: MQESHFFAHLARMKLIQRWPLMRSISSENISEHSLQVAFVAHALAVIKNKKFGGTLNPERIALLAMYHDTSEVLTGDLPTPIKYFNPEIAKEYKKIEAAAERRLLDMLPEELRDDFRPFLISNTADPDESAIVKQADAICAYLKCLEELSAGNHEYAQAKKRLDVTLRERHSEEMAYFLQTFAPSFELTLDEIS.

Substrate-binding positions include 18 to 19 (RW) and histidine 33. Residues 30–142 (ISEHSLQVAF…VKQADAICAY (113 aa)) form the HD domain. The a divalent metal cation site is built by histidine 33, histidine 68, and aspartate 69. Substrate is bound by residues aspartate 69, 77–80 (DLPT), and aspartate 137. Residue aspartate 137 coordinates a divalent metal cation.

Belongs to the 5DNU family. In terms of assembly, homodimer. A divalent metal cation serves as cofactor.

It localises to the cytoplasm. The enzyme catalyses a 2'-deoxyribonucleoside 5'-phosphate + H2O = a 2'-deoxyribonucleoside + phosphate. Its function is as follows. Catalyzes the strictly specific dephosphorylation of 2'-deoxyribonucleoside 5'-monophosphates. In Vibrio cholerae serotype O1 (strain ATCC 39315 / El Tor Inaba N16961), this protein is 5'-deoxynucleotidase VC_1978.